The primary structure comprises 283 residues: Lectin-like protein At1g53080 (283 aa).

The first 23 residues, 1–23, serve as a signal peptide directing secretion; it reads MQIHKLCIFVLFISLLSSKTISA. The tract at residues 24–277 is legume-lectin like; that stretch reads VKFNFNRFDG…RHDIWSWSFE (254 aa). N-linked (GlcNAc...) asparagine glycosylation is found at asparagine 84 and asparagine 138. Serine 247 is subject to Phosphoserine.

This sequence belongs to the leguminous lectin family.

Its subcellular location is the secreted. The protein resides in the extracellular space. It is found in the apoplast. The sequence is that of Lectin-like protein At1g53080 from Arabidopsis thaliana (Mouse-ear cress).